A 400-amino-acid polypeptide reads, in one-letter code: MGCDVSRPQRITVLGATGSIGLSTLDVIARHPDRYQAFALTGYSRIDELLALCVRHRPAFAVVPSTEAAVRLRASLAAAGCTTEVLEGEAGLCQVASAAEVDAVMAAIVGAAGLRPTLAAVEAGKKVLLANKEALVMSGALFMEAVRQKGAVLLPIDSEHNAIFQCMPGDYARGLSAVGVRRILLTASGGPFRETPVEALLDVTPEQACAHPNWSMGRKISVDSASMMNKGLELIEACWLFDAVPSKVEVVVHPQSVIHSLVDYVDGSVLAQLGNPDMRTPIANALAWPERIDSGVAPLDLFAIARLDFQAPDEQRFPCLRLARQAAEAGNSAPAVLNAANEVAVQAFLERRIRFPEIAGMIEQVLDQEPVVPLPSLDAVFAADQRARELSREWLRRHGR.

5 residues coordinate NADPH: T17, G18, S19, I20, and N131. K132 is a binding site for 1-deoxy-D-xylulose 5-phosphate. E133 contacts NADPH. D157 contributes to the Mn(2+) binding site. 1-deoxy-D-xylulose 5-phosphate is bound by residues S158, E159, S188, and H211. Residue E159 participates in Mn(2+) binding. G217 is an NADPH binding site. Residues S224, N229, K230, and E233 each coordinate 1-deoxy-D-xylulose 5-phosphate. Residue E233 coordinates Mn(2+).

This sequence belongs to the DXR family. Mg(2+) is required as a cofactor. It depends on Mn(2+) as a cofactor.

It carries out the reaction 2-C-methyl-D-erythritol 4-phosphate + NADP(+) = 1-deoxy-D-xylulose 5-phosphate + NADPH + H(+). Its pathway is isoprenoid biosynthesis; isopentenyl diphosphate biosynthesis via DXP pathway; isopentenyl diphosphate from 1-deoxy-D-xylulose 5-phosphate: step 1/6. In terms of biological role, catalyzes the NADPH-dependent rearrangement and reduction of 1-deoxy-D-xylulose-5-phosphate (DXP) to 2-C-methyl-D-erythritol 4-phosphate (MEP). In Pseudomonas putida (strain ATCC 47054 / DSM 6125 / CFBP 8728 / NCIMB 11950 / KT2440), this protein is 1-deoxy-D-xylulose 5-phosphate reductoisomerase.